The following is a 309-amino-acid chain: Protein FdhE homolog (309 aa).

The protein belongs to the FdhE family.

The protein localises to the cytoplasm. Functionally, necessary for formate dehydrogenase activity. The chain is Protein FdhE homolog from Pseudomonas aeruginosa (strain ATCC 15692 / DSM 22644 / CIP 104116 / JCM 14847 / LMG 12228 / 1C / PRS 101 / PAO1).